A 257-amino-acid chain; its full sequence is Phosphatidylglycerol--prolipoprotein diacylglyceryl transferase (257 aa).

Transmembrane regions (helical) follow at residues 13 to 33, 49 to 69, 88 to 108, 123 to 143, 152 to 172, 185 to 202, and 223 to 243; these read IGPI…AIGG, FLLN…RLMF, IYEG…AGLY, FAVL…IFNQ, FAFG…ILLI, GYQF…RGLI, and IGFF…AYWM. Arginine 136 contributes to the a 1,2-diacyl-sn-glycero-3-phospho-(1'-sn-glycerol) binding site.

Belongs to the Lgt family.

Its subcellular location is the cell membrane. It catalyses the reaction L-cysteinyl-[prolipoprotein] + a 1,2-diacyl-sn-glycero-3-phospho-(1'-sn-glycerol) = an S-1,2-diacyl-sn-glyceryl-L-cysteinyl-[prolipoprotein] + sn-glycerol 1-phosphate + H(+). Its pathway is protein modification; lipoprotein biosynthesis (diacylglyceryl transfer). Catalyzes the transfer of the diacylglyceryl group from phosphatidylglycerol to the sulfhydryl group of the N-terminal cysteine of a prolipoprotein, the first step in the formation of mature lipoproteins. The chain is Phosphatidylglycerol--prolipoprotein diacylglyceryl transferase from Thermoanaerobacter pseudethanolicus (strain ATCC 33223 / 39E) (Clostridium thermohydrosulfuricum).